The sequence spans 598 residues: UvrABC system protein C (598 aa).

In terms of domain architecture, GIY-YIG spans 13-92 (SSPGVYLMKD…IKKYQPRYNV (80 aa)). Residues 206–241 (RSTISNLEKAIEKASQEQKFEHAAALYRTLTLIRQT) enclose the UVR domain.

The protein belongs to the UvrC family. Interacts with UvrB in an incision complex.

The protein localises to the cytoplasm. In terms of biological role, the UvrABC repair system catalyzes the recognition and processing of DNA lesions. UvrC both incises the 5' and 3' sides of the lesion. The N-terminal half is responsible for the 3' incision and the C-terminal half is responsible for the 5' incision. The chain is UvrABC system protein C from Chlamydia trachomatis serovar A (strain ATCC VR-571B / DSM 19440 / HAR-13).